Here is a 362-residue protein sequence, read N- to C-terminus: MAQIFNFSSGPAMLPAEVLKQAQQELRDWNGLGTSVMEVSHRGKEFIQVAEEAEKDFRDLLNVPSNYKVLFCHGGGRGQFAAVPLNILGDKTTADYVDAGYWAASAIKEAKKYCTPNVFDAKVTVDGLRAVKPMSEWQLSDNAAYMHYCPNETIDGIAIDETPDFGKDVVVAADFSSTILSRPIDVSRYGVIYAGAQKNIGPAGLTIVIVREDLLGKANIACPSILDYSILNDNDSMFNTPPTFAWYLSGLVFKWLKANGGVAAMDKINQQKAELLYGVIDNSDFYRNDVAKANRSRMNVPFQLADSALDKLFLEESFAAGLHALKGHRVVGGMRASIYNAMPLEGVKALTDFMVEFERRHG.

L-glutamate is bound by residues serine 9 and arginine 42. Pyridoxal 5'-phosphate-binding positions include 76 to 77, tryptophan 102, threonine 153, aspartate 174, and glutamine 197; that span reads GR. Residue lysine 198 is modified to N6-(pyridoxal phosphate)lysine. 239-240 serves as a coordination point for pyridoxal 5'-phosphate; sequence NT.

The protein belongs to the class-V pyridoxal-phosphate-dependent aminotransferase family. SerC subfamily. As to quaternary structure, homodimer. Pyridoxal 5'-phosphate is required as a cofactor.

It is found in the cytoplasm. It carries out the reaction O-phospho-L-serine + 2-oxoglutarate = 3-phosphooxypyruvate + L-glutamate. The catalysed reaction is 4-(phosphooxy)-L-threonine + 2-oxoglutarate = (R)-3-hydroxy-2-oxo-4-phosphooxybutanoate + L-glutamate. It functions in the pathway amino-acid biosynthesis; L-serine biosynthesis; L-serine from 3-phospho-D-glycerate: step 2/3. Its pathway is cofactor biosynthesis; pyridoxine 5'-phosphate biosynthesis; pyridoxine 5'-phosphate from D-erythrose 4-phosphate: step 3/5. Its function is as follows. Catalyzes the reversible conversion of 3-phosphohydroxypyruvate to phosphoserine and of 3-hydroxy-2-oxo-4-phosphonooxybutanoate to phosphohydroxythreonine. The protein is Phosphoserine aminotransferase of Escherichia coli O6:K15:H31 (strain 536 / UPEC).